The primary structure comprises 726 residues: Serine/threonine-protein kinase PKH3 (726 aa).

The Protein kinase domain occupies Phe-10 to Phe-271. ATP is bound by residues Leu-16–Val-24 and Lys-39. The active-site Proton acceptor is the Asp-136. Residues Gln-629–Tyr-679 form a disordered region. Positions Gln-663–Thr-673 are enriched in basic and acidic residues.

The protein belongs to the protein kinase superfamily. Ser/Thr protein kinase family.

It catalyses the reaction L-seryl-[protein] + ATP = O-phospho-L-seryl-[protein] + ADP + H(+). The catalysed reaction is L-threonyl-[protein] + ATP = O-phospho-L-threonyl-[protein] + ADP + H(+). Serine/threonine-protein kinase. In Eremothecium gossypii (strain ATCC 10895 / CBS 109.51 / FGSC 9923 / NRRL Y-1056) (Yeast), this protein is Serine/threonine-protein kinase PKH3 (PKH3).